We begin with the raw amino-acid sequence, 282 residues long: CD320 antigen (282 aa).

Positions 1–35 (MSGGWMAQVGAWRTGALGLALLLLLGLGLGLEAAA) are cleaved as a signal peptide. Residues 36–229 (SPLSTPTSAQ…GDQSGSPTAY (194 aa)) are Extracellular-facing. Residues 53–90 (SCPPTKFQCRTSGLCVPLTWRCDRDLDCSDGSDEEECR) enclose the LDL-receptor class A 1 domain. Disulfide bonds link Cys54–Cys67, Cys61–Cys80, and Cys74–Cys89. Ca(2+)-binding residues include Trp72, Asp75, Asp77, Asp79, Asp85, and Glu86. Asn126 is a glycosylation site (N-linked (GlcNAc...) asparagine). The LDL-receptor class A 2 domain occupies 131–168 (ACLAGELRCTLSDDCIPLTWRCDGHPDCPDSSDELGCG). Intrachain disulfides connect Cys132/Cys145, Cys139/Cys158, and Cys152/Cys167. Ca(2+)-binding residues include Trp150, Asp153, His155, Asp157, Asp163, and Glu164. Asn195 and Asn213 each carry an N-linked (GlcNAc...) asparagine glycan. Residues 199–223 (MGPPVTLESVPSVGNATSSSAGDQS) form a disordered region. Residues 210–223 (SVGNATSSSAGDQS) are compositionally biased toward polar residues. The helical transmembrane segment at 230-250 (GVIAAAAVLSASLVTATLLLL) threads the bilayer. Topologically, residues 251–282 (SWLRAQERLRPLGLLVAMKESLLLSEQKTSLP) are cytoplasmic.

As to quaternary structure, interacts (via LDL-receptor class A domains) with TCN2. Detected in the germinal center (GC) of lymphoid follicles (at protein level). Expressed abundantly on follicular dendritic cells (FDCs).

It is found in the cell membrane. Its function is as follows. Receptor for transcobalamin saturated with cobalamin (TCbl). Plays an important role in cobalamin uptake. Plasma membrane protein that is expressed on follicular dendritic cells (FDC) and mediates interaction with germinal center B cells. Functions as costimulator to promote B cell responses to antigenic stimuli; promotes B cell differentiation and proliferation. Germinal center-B (GC-B) cells differentiate into memory B-cells and plasma cells (PC) through interaction with T-cells and follicular dendritic cells (FDC). CD320 augments the proliferation of PC precursors generated by IL-10. The protein is CD320 antigen (CD320) of Homo sapiens (Human).